We begin with the raw amino-acid sequence, 201 residues long: Large ribosomal subunit protein uL4 (201 aa).

Residues 42 to 67 (GNSAQKTRSEVSGGGKKPWNQKGTGR) form a disordered region.

It belongs to the universal ribosomal protein uL4 family. Part of the 50S ribosomal subunit.

Its function is as follows. One of the primary rRNA binding proteins, this protein initially binds near the 5'-end of the 23S rRNA. It is important during the early stages of 50S assembly. It makes multiple contacts with different domains of the 23S rRNA in the assembled 50S subunit and ribosome. Forms part of the polypeptide exit tunnel. The chain is Large ribosomal subunit protein uL4 from Legionella pneumophila (strain Lens).